Reading from the N-terminus, the 129-residue chain is UPF0325 protein Ent638_0703 (129 aa).

This sequence belongs to the UPF0325 family.

The sequence is that of UPF0325 protein Ent638_0703 from Enterobacter sp. (strain 638).